A 165-amino-acid chain; its full sequence is Ribonuclease H2 subunit C (165 aa).

The residue at position 1 (Met1) is an N-acetylmethionine.

Belongs to the RNase H2 subunit C family. In terms of assembly, the RNase H2 complex is a heterotrimer composed of the catalytic subunit RNASEH2A and the non-catalytic subunits RNASEH2B and RNASEH2C.

It is found in the nucleus. Non catalytic subunit of RNase H2, an endonuclease that specifically degrades the RNA of RNA:DNA hybrids. Participates in DNA replication, possibly by mediating the removal of lagging-strand Okazaki fragment RNA primers during DNA replication. Mediates the excision of single ribonucleotides from DNA:RNA duplexes. This is Ribonuclease H2 subunit C (RNASEH2C) from Bos taurus (Bovine).